We begin with the raw amino-acid sequence, 69 residues long: DNA gyrase inhibitor YacG (69 aa).

4 residues coordinate Zn(2+): cysteine 9, cysteine 12, cysteine 28, and cysteine 32. Residues 48 to 69 (PVSPDAEDELFSGDLEAPHRGH) form a disordered region.

This sequence belongs to the DNA gyrase inhibitor YacG family. Interacts with GyrB. The cofactor is Zn(2+).

Functionally, inhibits all the catalytic activities of DNA gyrase by preventing its interaction with DNA. Acts by binding directly to the C-terminal domain of GyrB, which probably disrupts DNA binding by the gyrase. This chain is DNA gyrase inhibitor YacG, found in Pseudomonas syringae pv. syringae (strain B728a).